A 435-amino-acid polypeptide reads, in one-letter code: Cytochrome c biogenesis protein CcsB (435 aa).

A run of 3 helical transmembrane segments spans residues 11–31 (LRVAIFLLLIIALSSSLGTAL), 69–89 (SDWFLSLLLWLGIALVFCSWR), and 159–179 (VGPLMVHTGLVILMLGAVWGV).

Belongs to the Ccs1/CcsB family. May interact with CcsA.

The protein localises to the plastid. It localises to the organellar chromatophore thylakoid membrane. In terms of biological role, required during biogenesis of c-type cytochromes (cytochrome c6 and cytochrome f) at the step of heme attachment. The protein is Cytochrome c biogenesis protein CcsB of Paulinella chromatophora.